We begin with the raw amino-acid sequence, 258 residues long: Imidazole glycerol phosphate synthase subunit HisF (258 aa).

Catalysis depends on residues Asp11 and Asp130.

This sequence belongs to the HisA/HisF family. Heterodimer of HisH and HisF.

Its subcellular location is the cytoplasm. The catalysed reaction is 5-[(5-phospho-1-deoxy-D-ribulos-1-ylimino)methylamino]-1-(5-phospho-beta-D-ribosyl)imidazole-4-carboxamide + L-glutamine = D-erythro-1-(imidazol-4-yl)glycerol 3-phosphate + 5-amino-1-(5-phospho-beta-D-ribosyl)imidazole-4-carboxamide + L-glutamate + H(+). It participates in amino-acid biosynthesis; L-histidine biosynthesis; L-histidine from 5-phospho-alpha-D-ribose 1-diphosphate: step 5/9. IGPS catalyzes the conversion of PRFAR and glutamine to IGP, AICAR and glutamate. The HisF subunit catalyzes the cyclization activity that produces IGP and AICAR from PRFAR using the ammonia provided by the HisH subunit. The sequence is that of Imidazole glycerol phosphate synthase subunit HisF from Baumannia cicadellinicola subsp. Homalodisca coagulata.